A 379-amino-acid polypeptide reads, in one-letter code: Homoserine O-succinyltransferase (379 aa).

The region spanning 51-360 (NAVLICHALS…DSPYGHDAFL (310 aa)) is the AB hydrolase-1 domain. Ser-157 acts as the Nucleophile in catalysis. Arg-227 serves as a coordination point for substrate. Catalysis depends on residues Asp-323 and His-356. A substrate-binding site is contributed by Asp-357.

It belongs to the AB hydrolase superfamily. MetX family. In terms of assembly, homodimer.

It is found in the cytoplasm. The enzyme catalyses L-homoserine + succinyl-CoA = O-succinyl-L-homoserine + CoA. It participates in amino-acid biosynthesis; L-methionine biosynthesis via de novo pathway; O-succinyl-L-homoserine from L-homoserine: step 1/1. Functionally, transfers a succinyl group from succinyl-CoA to L-homoserine, forming succinyl-L-homoserine. The chain is Homoserine O-succinyltransferase from Pseudomonas putida (strain ATCC 700007 / DSM 6899 / JCM 31910 / BCRC 17059 / LMG 24140 / F1).